Here is a 98-residue protein sequence, read N- to C-terminus: Cobalt transport protein CbiN (98 aa).

2 consecutive transmembrane segments (helical) span residues 6 to 26 and 68 to 88; these read VLMI…YSGL and SLLF…FFGY.

This sequence belongs to the CbiN family. Forms an energy-coupling factor (ECF) transporter complex composed of an ATP-binding protein (A component, CbiO), a transmembrane protein (T component, CbiQ) and 2 possible substrate-capture proteins (S components, CbiM and CbiN) of unknown stoichimetry.

Its subcellular location is the cell membrane. Its pathway is cofactor biosynthesis; adenosylcobalamin biosynthesis. Part of the energy-coupling factor (ECF) transporter complex CbiMNOQ involved in cobalt import. The sequence is that of Cobalt transport protein CbiN from Methanococcus maripaludis (strain DSM 14266 / JCM 13030 / NBRC 101832 / S2 / LL).